A 46-amino-acid chain; its full sequence is Cuticle protein 4.9 (46 aa).

Component of the cuticle of migratory locust which contains more than 100 different structural proteins. This Locusta migratoria (Migratory locust) protein is Cuticle protein 4.9.